The chain runs to 468 residues: 3-isopropylmalate dehydratase large subunit (468 aa).

Residues cysteine 347, cysteine 408, and cysteine 411 each contribute to the [4Fe-4S] cluster site.

It belongs to the aconitase/IPM isomerase family. LeuC type 1 subfamily. In terms of assembly, heterodimer of LeuC and LeuD. [4Fe-4S] cluster serves as cofactor.

The catalysed reaction is (2R,3S)-3-isopropylmalate = (2S)-2-isopropylmalate. Its pathway is amino-acid biosynthesis; L-leucine biosynthesis; L-leucine from 3-methyl-2-oxobutanoate: step 2/4. Catalyzes the isomerization between 2-isopropylmalate and 3-isopropylmalate, via the formation of 2-isopropylmaleate. This is 3-isopropylmalate dehydratase large subunit from Janthinobacterium sp. (strain Marseille) (Minibacterium massiliensis).